The sequence spans 409 residues: Shaggy-related protein kinase NtK-1 (409 aa).

The disordered stretch occupies residues 1-27; that stretch reads MTSVGLAPVSGLRESSSHSVGVDRLPE. Residues 73–357 enclose the Protein kinase domain; that stretch reads YMAERIVGQG…ALEAVTHAFF (285 aa). Residues 79–87 and lysine 102 each bind ATP; that span reads VGQGSFGVV. Aspartate 198 functions as the Proton acceptor in the catalytic mechanism.

This sequence belongs to the protein kinase superfamily. CMGC Ser/Thr protein kinase family. GSK-3 subfamily. Autophosphorylated mainly on threonine and serine residues.

The enzyme catalyses L-seryl-[protein] + ATP = O-phospho-L-seryl-[protein] + ADP + H(+). It catalyses the reaction L-threonyl-[protein] + ATP = O-phospho-L-threonyl-[protein] + ADP + H(+). Its function is as follows. May mediate extracellular signals to regulate transcription in differentiating cells. The protein is Shaggy-related protein kinase NtK-1 (NTK-1) of Nicotiana tabacum (Common tobacco).